The sequence spans 152 residues: Large ribosomal subunit protein bL9 (152 aa).

It belongs to the bacterial ribosomal protein bL9 family.

Its function is as follows. Binds to the 23S rRNA. This is Large ribosomal subunit protein bL9 from Nostoc punctiforme (strain ATCC 29133 / PCC 73102).